Consider the following 282-residue polypeptide: NADPH-dependent 7-cyano-7-deazaguanine reductase (282 aa).

88-90 (IES) serves as a coordination point for substrate. 90–91 (SK) is an NADPH binding site. Catalysis depends on C190, which acts as the Thioimide intermediate. Catalysis depends on D197, which acts as the Proton donor. 229–230 (HE) provides a ligand contact to substrate. Residue 258–259 (RG) coordinates NADPH.

This sequence belongs to the GTP cyclohydrolase I family. QueF type 2 subfamily. As to quaternary structure, homodimer.

Its subcellular location is the cytoplasm. It catalyses the reaction 7-aminomethyl-7-carbaguanine + 2 NADP(+) = 7-cyano-7-deazaguanine + 2 NADPH + 3 H(+). The protein operates within tRNA modification; tRNA-queuosine biosynthesis. Functionally, catalyzes the NADPH-dependent reduction of 7-cyano-7-deazaguanine (preQ0) to 7-aminomethyl-7-deazaguanine (preQ1). The protein is NADPH-dependent 7-cyano-7-deazaguanine reductase of Salmonella paratyphi A (strain ATCC 9150 / SARB42).